The following is a 226-amino-acid chain: Ribosomal RNA large subunit methyltransferase E (226 aa).

Residues G82, W84, D100, D116, and D140 each coordinate S-adenosyl-L-methionine. K180 serves as the catalytic Proton acceptor.

Belongs to the class I-like SAM-binding methyltransferase superfamily. RNA methyltransferase RlmE family.

Its subcellular location is the cytoplasm. It catalyses the reaction uridine(2552) in 23S rRNA + S-adenosyl-L-methionine = 2'-O-methyluridine(2552) in 23S rRNA + S-adenosyl-L-homocysteine + H(+). Specifically methylates the uridine in position 2552 of 23S rRNA at the 2'-O position of the ribose in the fully assembled 50S ribosomal subunit. The polypeptide is Ribosomal RNA large subunit methyltransferase E (Caulobacter sp. (strain K31)).